Here is a 31-residue protein sequence, read N- to C-terminus: Maltose/maltodextrin import ATP-binding protein MalK (31 aa).

It belongs to the ABC transporter superfamily. Maltooligosaccharide importer (TC 3.A.1.1.1) family. As to quaternary structure, the complex is composed of two ATP-binding proteins (MalK), two transmembrane proteins (MalG and MalK) and a solute-binding protein (MalE).

The protein localises to the cell inner membrane. The catalysed reaction is D-maltose(out) + ATP + H2O = D-maltose(in) + ADP + phosphate + H(+). Functionally, part of the ABC transporter complex MalEFGK involved in maltose/maltodextrin import. Responsible for energy coupling to the transport system. This is Maltose/maltodextrin import ATP-binding protein MalK from Photorhabdus luminescens (Xenorhabdus luminescens).